Consider the following 515-residue polypeptide: MEELQLQGYLEKDGSRQFLYPLIFQEYIYTLAHDHGLNSSIFYEPMEIVGLGYDNKSSSVLVKRLITRMYQQNSLIYSMNDFNQNQFVGHNNSFYSNFDSQMVSEGFAVIAEIPFSLRLVPSSEEIPKSQNLRSIHSIFPFLEDKLSHFNYVLDILIPYPIHLEILVQILQCWIQDVPSLHFLRLFLHEFHNWNNLITPTKSISVFSKENKRLFRILYNSYVSEYEFVFVFLRKQSYYLRSTSSRAFLERTHFYVKIEHLIDVCHNHFQKILWFFKDSFMHYVRYKGKAILASRGTYLLIKKWKCYLVNFWQYNFHFWSKPYRIHINPFSNYSFYFLGYISSVLINPSAVKNQMLENFYLVDTLTQKFDTIVPVIPLIGSLSKAKFCTILGHPISKPIWAELSDSDIIDRFGRICRNLSHYHSGSSKKQSLYRIKYILRLSCARTLARKHKSTVRNLLQRLGSGLLEEFFTEEEQVISPIFPKTTLFPLHGSHRERIWYLDIIRINDLANYLDWS.

Belongs to the intron maturase 2 family. MatK subfamily.

The protein resides in the plastid. Its subcellular location is the chloroplast. Its function is as follows. Usually encoded in the trnK tRNA gene intron. Probably assists in splicing its own and other chloroplast group II introns. This Trillium pusillum (Dwarf wakerobin) protein is Maturase K.